The following is a 353-amino-acid chain: Pleckstrin-2 (353 aa).

Met1 is subject to N-acetylmethionine. The PH 1 domain occupies 4–104 (GVLKEGFLVK…WAFEITGAIH (101 aa)). Ser120 is subject to Phosphoserine. Positions 139-225 (SNTGIRSSPN…DSTALYTFAE (87 aa)) constitute a DEP domain. A PH 2 domain is found at 247-353 (TVVKQGYLAK…EWIEAIKKLT (107 aa)).

The protein localises to the cell projection. Its subcellular location is the lamellipodium membrane. It localises to the cytoplasm. It is found in the cytoskeleton. In terms of biological role, may help orchestrate cytoskeletal arrangement. Contribute to lamellipodia formation. The chain is Pleckstrin-2 (PLEK2) from Homo sapiens (Human).